A 156-amino-acid polypeptide reads, in one-letter code: Small ribosomal subunit protein uS7 (156 aa).

This sequence belongs to the universal ribosomal protein uS7 family. In terms of assembly, part of the 30S ribosomal subunit. Contacts proteins S9 and S11.

One of the primary rRNA binding proteins, it binds directly to 16S rRNA where it nucleates assembly of the head domain of the 30S subunit. Is located at the subunit interface close to the decoding center, probably blocks exit of the E-site tRNA. The chain is Small ribosomal subunit protein uS7 from Magnetococcus marinus (strain ATCC BAA-1437 / JCM 17883 / MC-1).